The sequence spans 44 residues: Large ribosomal subunit protein P2 (44 aa).

Position 1 is an N-acetylmethionine (Met-1). 2 positions are modified to phosphoserine: Ser-17 and Ser-19. Lys-21 carries the N6-acetyllysine; alternate modification. Lys-21 is modified (N6-succinyllysine; alternate).

This sequence belongs to the eukaryotic ribosomal protein P1/P2 family. As to quaternary structure, heterodimer with RPLP1 at the lateral ribosomal stalk of the large ribosomal subunit. In terms of processing, phosphorylated.

Plays an important role in the elongation step of protein synthesis. The polypeptide is Large ribosomal subunit protein P2 (RPLP2) (Oryctolagus cuniculus (Rabbit)).